The primary structure comprises 253 residues: Major prion protein (253 aa).

A signal peptide spans 1-22 (MANLGCWMLVLFVATWSNLGLC). An interaction with ADGRG6 region spans residues 23–38 (KKRPKPGGWNTGGSRY). Positions 23–230 (KKRPKPGGWN…ESQAYYQRGS (208 aa)) are interaction with GRB2, ERI3 and SYN1. A disordered region spans residues 25 to 108 (RPKPGGWNTG…WNKPSKPKTN (84 aa)). A run of 5 repeats spans residues 51–59 (PQGGGGWGQ), 60–67 (PHGGGWGQ), 68–75 (PHGGGWGQ), 76–83 (PHGGGWGQ), and 84–91 (PHGGGWGQ). Positions 51–91 (PQGGGGWGQPHGGGWGQPHGGGWGQPHGGGWGQPHGGGWGQ) are 5 X 8 AA tandem repeats of P-H-G-G-G-W-G-Q. Gly residues predominate over residues 52 to 95 (QGGGGWGQPHGGGWGQPHGGGWGQPHGGGWGQPHGGGWGQGGGT). H61, G62, G63, H69, G70, G71, H77, G78, G79, H85, G86, and G87 together coordinate Cu(2+). Residues C179 and C214 are joined by a disulfide bond. 2 N-linked (GlcNAc...) asparagine glycosylation sites follow: N181 and N197. S230 is lipidated: GPI-anchor amidated serine. The propeptide at 231-253 (SMVLFSSPPVILLISFLIFLIVG) is removed in mature form.

This sequence belongs to the prion family. In terms of assembly, monomer and homodimer. Has a tendency to aggregate into amyloid fibrils containing a cross-beta spine, formed by a steric zipper of superposed beta-strands. Soluble oligomers may represent an intermediate stage on the path to fibril formation. Copper binding may promote oligomerization. Interacts with GRB2, APP, ERI3/PRNPIP and SYN1. Mislocalized cytosolically exposed PrP interacts with MGRN1; this interaction alters MGRN1 subcellular location and causes lysosomal enlargement. Interacts with APP. Interacts with KIAA1191. Interacts with ADGRG6.

It localises to the cell membrane. It is found in the golgi apparatus. Its function is as follows. Its primary physiological function is unclear. May play a role in neuronal development and synaptic plasticity. May be required for neuronal myelin sheath maintenance. May promote myelin homeostasis through acting as an agonist for ADGRG6 receptor. May play a role in iron uptake and iron homeostasis. Soluble oligomers are toxic to cultured neuroblastoma cells and induce apoptosis (in vitro). Association with GPC1 (via its heparan sulfate chains) targets PRNP to lipid rafts. Also provides Cu(2+) or Zn(2+) for the ascorbate-mediated GPC1 deaminase degradation of its heparan sulfate side chains. The chain is Major prion protein (PRNP) from Pongo pygmaeus (Bornean orangutan).